A 600-amino-acid polypeptide reads, in one-letter code: ATP-dependent lipid A-core flippase (600 aa).

The next 5 helical transmembrane spans lie at 28-48 (IMAVLGLITYGAVDAAFIAFI), 80-100 (IMLMAPIAVILMFSLRGVANF), 182-202 (WKLSLCILVIGPIMGVVISVV), 267-287 (ISQPLIMVIGSFALAFVLYAA), and 295-315 (DLTAGTFAAILGAMLAMLQPI). The region spanning 28 to 327 (IMAVLGLITY…LTRVNAEFQR (300 aa)) is the ABC transmembrane type-1 domain. The 238-residue stretch at 359-596 (LAFDNVTFAY…AGIYANLYQM (238 aa)) folds into the ABC transporter domain. 393 to 400 (GRSGSGKS) is a binding site for ATP.

The protein belongs to the ABC transporter superfamily. Lipid exporter (TC 3.A.1.106) family. Homodimer.

The protein resides in the cell inner membrane. It catalyses the reaction ATP + H2O + lipid A-core oligosaccharideSide 1 = ADP + phosphate + lipid A-core oligosaccharideSide 2.. Involved in lipopolysaccharide (LPS) biosynthesis. Translocates lipid A-core from the inner to the outer leaflet of the inner membrane. Transmembrane domains (TMD) form a pore in the inner membrane and the ATP-binding domain (NBD) is responsible for energy generation. The sequence is that of ATP-dependent lipid A-core flippase from Shewanella frigidimarina (strain NCIMB 400).